Reading from the N-terminus, the 211-residue chain is Ribosomal RNA small subunit methyltransferase G (211 aa).

S-adenosyl-L-methionine is bound by residues G76, L81, 127–128 (VE), and R142.

The protein belongs to the methyltransferase superfamily. RNA methyltransferase RsmG family.

The protein localises to the cytoplasm. It catalyses the reaction guanosine(527) in 16S rRNA + S-adenosyl-L-methionine = N(7)-methylguanosine(527) in 16S rRNA + S-adenosyl-L-homocysteine. In terms of biological role, specifically methylates the N7 position of guanine in position 527 of 16S rRNA. The polypeptide is Ribosomal RNA small subunit methyltransferase G (Vibrio campbellii (strain ATCC BAA-1116)).